We begin with the raw amino-acid sequence, 290 residues long: Fructose-bisphosphate aldolase (290 aa).

S51 contacts D-glyceraldehyde 3-phosphate. The active-site Proton donor is D86. The Zn(2+) site is built by H87, D107, E137, and H179. G180 contributes to the dihydroxyacetone phosphate binding site. Position 208 (H208) interacts with Zn(2+). Dihydroxyacetone phosphate-binding positions include 209–211 (GGS) and 230–233 (NINT).

It belongs to the class II fructose-bisphosphate aldolase family. Homodimer. Requires Zn(2+) as cofactor.

It carries out the reaction beta-D-fructose 1,6-bisphosphate = D-glyceraldehyde 3-phosphate + dihydroxyacetone phosphate. It participates in carbohydrate degradation; glycolysis; D-glyceraldehyde 3-phosphate and glycerone phosphate from D-glucose: step 4/4. Its function is as follows. Catalyzes the aldol condensation of dihydroxyacetone phosphate (DHAP or glycerone-phosphate) with glyceraldehyde 3-phosphate (G3P) to form fructose 1,6-bisphosphate (FBP) in gluconeogenesis and the reverse reaction in glycolysis. The polypeptide is Fructose-bisphosphate aldolase (fba) (Ureaplasma parvum serovar 3 (strain ATCC 700970)).